We begin with the raw amino-acid sequence, 472 residues long: ATP synthase subunit beta (472 aa).

An ATP-binding site is contributed by 160–167 (GGAGVGKT).

This sequence belongs to the ATPase alpha/beta chains family. In terms of assembly, F-type ATPases have 2 components, CF(1) - the catalytic core - and CF(0) - the membrane proton channel. CF(1) has five subunits: alpha(3), beta(3), gamma(1), delta(1), epsilon(1). CF(0) has three main subunits: a(1), b(2) and c(9-12). The alpha and beta chains form an alternating ring which encloses part of the gamma chain. CF(1) is attached to CF(0) by a central stalk formed by the gamma and epsilon chains, while a peripheral stalk is formed by the delta and b chains.

It is found in the cell membrane. It carries out the reaction ATP + H2O + 4 H(+)(in) = ADP + phosphate + 5 H(+)(out). Functionally, produces ATP from ADP in the presence of a proton gradient across the membrane. The catalytic sites are hosted primarily by the beta subunits. This is ATP synthase subunit beta from Lachnoclostridium phytofermentans (strain ATCC 700394 / DSM 18823 / ISDg) (Clostridium phytofermentans).